Here is a 593-residue protein sequence, read N- to C-terminus: MLPAHKQTLEALLADSVTQVAHALKGADAAFVAPAITLERPKVAAHGDVACNVAMQLAKPLGTNPRQLAEKIVAALTAQPAAQGLVDAADIAGPGFINLRLTAAAKQAVIAAVFEQGRAFGTSDREKGKQVLLEFVSANPTGPLHVGHGRQAALGDVLANVIASQGYAVHREFYYNDAGVQIGNLAISTQARARGLKPGDAGWPEAAYNGEYIADIARDYLNRETVAAKDGEPVTGAGDIDDLDAIRKFAVAYLRHEQDMDLQAFGVKFDQYYLESSLYSEGRVEKTVDALVKAGMTYEQDGALWLRTTDEGDDKDRVMRKSDGTYTYFVPDVAYHVTKWERGFTQVINIQGSDHHGTIARVRAGLQGLHVGIPKGYPDYVLHKMVTVMRDGQEVKLSKRAGSYVTVRDLIEWSGGAAPGQEAAPDLIDEATITRGRDAVRFFLISRKADTEFVFDIDLALKQNDENPVYYVQYAHARICSVLNELKSRYNVDVAQLPGADLSQLTSAQAVSLMQKLAEYPDMLTHAAKELAPHAVAFYLRDLAGEFHSFYNAERVLVDDEAPRNARAALLAATRQVLENGLAVLGVSAPAKM.

A 'HIGH' region motif is present at residues 138–148 (ANPTGPLHVGH).

It belongs to the class-I aminoacyl-tRNA synthetase family. Monomer.

The protein localises to the cytoplasm. It catalyses the reaction tRNA(Arg) + L-arginine + ATP = L-arginyl-tRNA(Arg) + AMP + diphosphate. This is Arginine--tRNA ligase from Burkholderia ambifaria (strain ATCC BAA-244 / DSM 16087 / CCUG 44356 / LMG 19182 / AMMD) (Burkholderia cepacia (strain AMMD)).